Consider the following 85-residue polypeptide: MSNNFDHTMQFDFSKNKEDLTKSILTDVYNSLKEKGYNPVNQLVGYLISGDPTYITNYNGARALVRKLERDEILEEVIKSYLEIK.

It belongs to the UPF0297 family.

The chain is UPF0297 protein CPR_1749 from Clostridium perfringens (strain SM101 / Type A).